Here is a 261-residue protein sequence, read N- to C-terminus: ATP synthase subunit a (261 aa).

7 consecutive transmembrane segments (helical) span residues 31–51 (IAFT…LIFM), 64–84 (WQAA…TNIG), 97–117 (LFMF…VVGV), 126–146 (LTVT…VGFW), 166–188 (IPMI…GLRL), 201–223 (VLAG…VSIP), and 235–255 (ELLV…LYLN).

This sequence belongs to the ATPase A chain family. F-type ATPases have 2 components, CF(1) - the catalytic core - and CF(0) - the membrane proton channel. CF(1) has five subunits: alpha(3), beta(3), gamma(1), delta(1), epsilon(1). CF(0) has three main subunits: a(1), b(2) and c(9-12). The alpha and beta chains form an alternating ring which encloses part of the gamma chain. CF(1) is attached to CF(0) by a central stalk formed by the gamma and epsilon chains, while a peripheral stalk is formed by the delta and b chains.

Its subcellular location is the cell inner membrane. Functionally, key component of the proton channel; it plays a direct role in the translocation of protons across the membrane. The sequence is that of ATP synthase subunit a from Rhizorhabdus wittichii (strain DSM 6014 / CCUG 31198 / JCM 15750 / NBRC 105917 / EY 4224 / RW1) (Sphingomonas wittichii).